Here is a 777-residue protein sequence, read N- to C-terminus: Cyclin-F (777 aa).

The short motif at 20–28 is the Nuclear localization signal 1 element; that stretch reads KRRIKRRPR. Positions 29–76 constitute an F-box domain; sequence NLTILSLPEDVLFHILKWLSVGDILAVRAVHSHLKYLVDNHASVWASA. The Cyclin N-terminal domain maps to 288-405; sequence QASQAVNKQQ…EIISALEGKI (118 aa). 3 short sequence motifs (d box) span residues 310-313, 343-346, and 349-352; these read RYIL, RRRL, and RYKL. 2 disordered regions span residues 544-591 and 651-777; these read QESP…TPTA and QESS…HLAS. Residues 568–574 carry the Nuclear localization signal 2 motif; it reads RRSKRKR. Positions 582–761 are PEST; sequence RGSFVTTPTA…ESGVHQQPVK (180 aa). Composition is skewed to low complexity over residues 695–708 and 719–731; these read SGYS…PISS and STSV…HSST. The span at 751–767 shows a compositional bias: polar residues; that stretch reads PESGVHQQPVKRQNLSV. The short motif at 762 to 765 is the D box 4 element; that stretch reads RQNL. Positions 768–777 are enriched in basic and acidic residues; it reads HSDKDMHLAS.

The protein belongs to the cyclin family. Cyclin AB subfamily. In terms of assembly, component of the SCF(CCNF) complex consisting of CUL1, RBX1, SKP1 and CCNF. Interacts with SKP1. Interacts with CUL1. Interacts with CCNB1; interaction is required for nuclear localization of CCNB1. Interacts with CCP110; this interaction leads to CCP110 ubiquitination and degradation via the proteasome pathway. Interacts (via the Cyclin N-terminal domain) with MYBL2/BMYB. Interacts with FZR1/CDH1 (via N-terminus). Interacts with RRM2 (via Cy motif and when phosphorylated at 'Thr-33'); the interaction occurs exclusively in G2 and early M. Interacts with CDC6 (via Cy motif); the interaction takes place during G2 and M phase. In terms of processing, degraded when the spindle assembly checkpoint is activated during the G2-M transition. Degradation is not dependent on the proteasome or ubiquitin and depends on the C-terminal PEST sequence. Post-translationally, phosphorylated just before cells enter into mitosis. Ubiquitinated by the anaphase-promoting complex (APC/C); leading to its degradation by the proteasome.

Its subcellular location is the nucleus. It is found in the cytoplasm. The protein localises to the perinuclear region. It localises to the cytoskeleton. The protein resides in the microtubule organizing center. Its subcellular location is the centrosome. It is found in the centriole. Functionally, substrate recognition component of a SCF (SKP1-CUL1-F-box protein) E3 ubiquitin-protein ligase complex which mediates the ubiquitination and subsequent proteasomal degradation of target proteins. The SCF(CCNF) E3 ubiquitin-protein ligase complex is an integral component of the ubiquitin proteasome system (UPS) and links proteasome degradation to the cell cycle. Mediates the substrate recognition and the proteasomal degradation of various target proteins involved in the regulation of cell cycle progression and in the maintenance of genome stability. Mediates the ubiquitination and subsequent proteasomal degradation of CP110 during G2 phase, thereby acting as an inhibitor of centrosome reduplication. In G2, mediates the ubiquitination and proteasomal degradation of CDC6, thereby suppressing DNA re-replication and preventing genome instability. Involved in the ubiquitination and degradation of the substrate adapter CDH1 of the anaphase-promoting complex (APC/C), thereby acting as an antagonist of APC/C in regulating G1 progression and S phase entry. May play a role in the G2 cell cycle checkpoint control after DNA damage, possibly by promoting the ubiquitination of MYBL2/BMYB. This is Cyclin-F (Ccnf) from Mus musculus (Mouse).